A 640-amino-acid chain; its full sequence is Telomere repeat-binding protein 4 (640 aa).

In terms of domain architecture, Ubiquitin-like spans 343 to 422 (VKFSIKSLRI…LGNLGFTLEP (80 aa)). The interval 442–464 (TDSTKLSERSAASPALETGIPLP) is disordered. In terms of domain architecture, HTH myb-type spans 530 to 589 (SQRRTRRPFSVTEVEALVSAVEEVGTGRWRDVKLRSFENASHRTYVDLKDKWKTLVHTAS). Positions 558–585 (WRDVKLRSFENASHRTYVDLKDKWKTLV) form a DNA-binding region, H-T-H motif.

Homomultimer. Interacts with SNL1 (via PAH2). Interacts with STO. As to expression, expressed ubiquitously. Highest expression in flowers and roots.

It localises to the nucleus. Binds specifically to the plant telomeric double-stranded DNA sequences 5'-TTTAGGG-3'. At least 2 repeats of telomeric sequences are required for binding. Induces DNA bending. This is Telomere repeat-binding protein 4 (TRP4) from Arabidopsis thaliana (Mouse-ear cress).